The chain runs to 166 residues: NAD(P)H-quinone oxidoreductase subunit I, chloroplastic (166 aa).

4Fe-4S ferredoxin-type domains follow at residues 55 to 84 (GRIHFEFDKCIACEVCVRVCPIDLPVVDWK) and 95 to 124 (LNYSIDFGICIFCGNCVEYCPTNCLSMTEE). The [4Fe-4S] cluster site is built by C64, C67, C70, C74, C104, C107, C110, and C114.

This sequence belongs to the complex I 23 kDa subunit family. NDH is composed of at least 16 different subunits, 5 of which are encoded in the nucleus. Requires [4Fe-4S] cluster as cofactor.

The protein resides in the plastid. Its subcellular location is the chloroplast thylakoid membrane. The catalysed reaction is a plastoquinone + NADH + (n+1) H(+)(in) = a plastoquinol + NAD(+) + n H(+)(out). It carries out the reaction a plastoquinone + NADPH + (n+1) H(+)(in) = a plastoquinol + NADP(+) + n H(+)(out). In terms of biological role, NDH shuttles electrons from NAD(P)H:plastoquinone, via FMN and iron-sulfur (Fe-S) centers, to quinones in the photosynthetic chain and possibly in a chloroplast respiratory chain. The immediate electron acceptor for the enzyme in this species is believed to be plastoquinone. Couples the redox reaction to proton translocation, and thus conserves the redox energy in a proton gradient. The polypeptide is NAD(P)H-quinone oxidoreductase subunit I, chloroplastic (Stevia rebaudiana (Stevia)).